A 360-amino-acid chain; its full sequence is Phospho-N-acetylmuramoyl-pentapeptide-transferase (360 aa).

Helical transmembrane passes span 26–46, 70–90, 94–114, 136–156, 164–184, 199–219, 236–256, 263–283, 289–309, and 339–359; these read GVLA…FFIA, GTPT…TLLW, GNPL…IGFV, LQSL…SNPV, FIPH…YFVI, GLAI…AYVS, SGQM…FLWF, VFMG…VAIV, VLFI…IQVV, and AVRF…SLKI.

This sequence belongs to the glycosyltransferase 4 family. MraY subfamily. The cofactor is Mg(2+).

The protein resides in the cell inner membrane. It catalyses the reaction UDP-N-acetyl-alpha-D-muramoyl-L-alanyl-gamma-D-glutamyl-meso-2,6-diaminopimeloyl-D-alanyl-D-alanine + di-trans,octa-cis-undecaprenyl phosphate = di-trans,octa-cis-undecaprenyl diphospho-N-acetyl-alpha-D-muramoyl-L-alanyl-D-glutamyl-meso-2,6-diaminopimeloyl-D-alanyl-D-alanine + UMP. The protein operates within cell wall biogenesis; peptidoglycan biosynthesis. Catalyzes the initial step of the lipid cycle reactions in the biosynthesis of the cell wall peptidoglycan: transfers peptidoglycan precursor phospho-MurNAc-pentapeptide from UDP-MurNAc-pentapeptide onto the lipid carrier undecaprenyl phosphate, yielding undecaprenyl-pyrophosphoryl-MurNAc-pentapeptide, known as lipid I. In Acidithiobacillus ferrooxidans (strain ATCC 23270 / DSM 14882 / CIP 104768 / NCIMB 8455) (Ferrobacillus ferrooxidans (strain ATCC 23270)), this protein is Phospho-N-acetylmuramoyl-pentapeptide-transferase.